Reading from the N-terminus, the 307-residue chain is Aspartate carbamoyltransferase catalytic subunit (307 aa).

Residues R58 and T59 each coordinate carbamoyl phosphate. K86 is an L-aspartate binding site. The carbamoyl phosphate site is built by R108, H138, and Q141. The L-aspartate site is built by R171 and R223. Positions 264 and 265 each coordinate carbamoyl phosphate.

Belongs to the aspartate/ornithine carbamoyltransferase superfamily. ATCase family. Heterododecamer (2C3:3R2) of six catalytic PyrB chains organized as two trimers (C3), and six regulatory PyrI chains organized as three dimers (R2).

It carries out the reaction carbamoyl phosphate + L-aspartate = N-carbamoyl-L-aspartate + phosphate + H(+). It functions in the pathway pyrimidine metabolism; UMP biosynthesis via de novo pathway; (S)-dihydroorotate from bicarbonate: step 2/3. Catalyzes the condensation of carbamoyl phosphate and aspartate to form carbamoyl aspartate and inorganic phosphate, the committed step in the de novo pyrimidine nucleotide biosynthesis pathway. This chain is Aspartate carbamoyltransferase catalytic subunit, found in Streptococcus suis (strain 98HAH33).